A 226-amino-acid chain; its full sequence is Endonuclease V (226 aa).

Mg(2+) contacts are provided by aspartate 42 and aspartate 110.

This sequence belongs to the endonuclease V family. The cofactor is Mg(2+).

It localises to the cytoplasm. The enzyme catalyses Endonucleolytic cleavage at apurinic or apyrimidinic sites to products with a 5'-phosphate.. DNA repair enzyme involved in the repair of deaminated bases. Selectively cleaves double-stranded DNA at the second phosphodiester bond 3' to a deoxyinosine leaving behind the intact lesion on the nicked DNA. This Thermus thermophilus (strain ATCC BAA-163 / DSM 7039 / HB27) protein is Endonuclease V.